Consider the following 111-residue polypeptide: Ribonuclease P protein component (111 aa).

It belongs to the RnpA family. Consists of a catalytic RNA component (M1 or rnpB) and a protein subunit.

It catalyses the reaction Endonucleolytic cleavage of RNA, removing 5'-extranucleotides from tRNA precursor.. In terms of biological role, RNaseP catalyzes the removal of the 5'-leader sequence from pre-tRNA to produce the mature 5'-terminus. It can also cleave other RNA substrates such as 4.5S RNA. The protein component plays an auxiliary but essential role in vivo by binding to the 5'-leader sequence and broadening the substrate specificity of the ribozyme. This is Ribonuclease P protein component from Mycoplasmopsis pulmonis (strain UAB CTIP) (Mycoplasma pulmonis).